The chain runs to 107 residues: Protein RnfH (107 aa).

Residues 82-107 (ARRKRAEKAKEEGRANKVTGGRPIER) are disordered.

The protein belongs to the UPF0125 (RnfH) family.

This chain is Protein RnfH, found in Pseudoalteromonas translucida (strain TAC 125).